Reading from the N-terminus, the 142-residue chain is Hemoglobin subunit alpha (142 aa).

The 141-residue stretch at 2-142 (VLSANDKSNV…VGNVLTSKYR (141 aa)) folds into the Globin domain. Histidine 59 serves as a coordination point for O2. Histidine 88 contributes to the heme b binding site.

Belongs to the globin family. In terms of assembly, heterotetramer of two alpha chains and two beta chains. As to expression, red blood cells.

Involved in oxygen transport from the lung to the various peripheral tissues. The sequence is that of Hemoglobin subunit alpha (HBA) from Aptenodytes forsteri (Emperor penguin).